The primary structure comprises 392 residues: Speckle-type POZ protein-like (392 aa).

Residues Lys-31–Val-161 form the MATH domain. Positions Thr-200 to Asp-267 constitute a BTB domain.

It belongs to the Tdpoz family. In terms of assembly, homodimer. Heterodimer with SPOP. Component of cullin-RING-based BCR (BTB-CUL3-RBX1) E3 ubiquitin-protein ligase complexes containing homodimeric SPOPL or the heterodimer formed by SPOP and SPOPL. Interacts with CUL3 and MACROH2A1.

Its subcellular location is the nucleus. It participates in protein modification; protein ubiquitination. Functionally, component of a cullin-RING-based BCR (BTB-CUL3-RBX1) E3 ubiquitin-protein ligase complex that mediates the ubiquitination and subsequent proteasomal degradation of target proteins, but with relatively low efficiency. Cullin-RING-based BCR (BTB-CUL3-RBX1) E3 ubiquitin-protein ligase complexes containing homodimeric SPOPL or the heterodimer formed by SPOP and SPOPL are less efficient than ubiquitin ligase complexes containing only SPOP. May function to down-regulate the activity of cullin-RING-based BCR (BTB-CUL3-RBX1) E3 ubiquitin-protein ligase complexes that contain SPOP. This is Speckle-type POZ protein-like (Spopl) from Mus musculus (Mouse).